Here is a 370-residue protein sequence, read N- to C-terminus: Pantothenate kinase 3 (370 aa).

E138 acts as the Proton acceptor in catalysis. S192, S195, and R207 together coordinate acetyl-CoA.

The protein belongs to the type II pantothenate kinase family. Homodimer. As to expression, highly expressed in the liver.

The protein localises to the cytoplasm. The catalysed reaction is (R)-pantothenate + ATP = (R)-4'-phosphopantothenate + ADP + H(+). It participates in cofactor biosynthesis; coenzyme A biosynthesis; CoA from (R)-pantothenate: step 1/5. With respect to regulation, subject to allosteric regulation, exists in two distinct conformational states, a catalytically incompetent (or open) conformation stabilized by the binding of acetyl(acyl)-CoA, and a catalytically competent (or closed) conformation stabilized by ATP-binding. Acetyl-CoA and its thioesters act as allosteric inhibitors and compete with the ATP-binding site. Strongly inhibited by acetyl-CoA, malonyl-CoA and palmitoyl CoA and modestly inhibited by CoA. Inhibited by calcium hopantenate. In terms of biological role, catalyzes the phosphorylation of pantothenate to generate 4'-phosphopantothenate in the first and rate-determining step of coenzyme A (CoA) synthesis. The chain is Pantothenate kinase 3 (Pank3) from Mus musculus (Mouse).